The following is a 382-amino-acid chain: MKITKITTYRLPPRWMFLKIETDEGVVGWGEPVIEGRARTVEAAVHELGDYLIGQDPSRINDLWQVMYRAGFYRGGPILMSAIAGIDQALWDIKGKVLNSPVWQLMGGLVRDKIKAYSWVGGDRPANVIDGIKILREIGFDTFKLNGCEELGLIDNSRAVDAAVNTVAQIREAFGNQIEFGLDFHGRVSAPMAKVLIKELEPYRPLFIEEPVLAEQAEYYPKLAAQTHIPLAAGERMFSRFDFKRVLEAGGISILQPDLSHAGGITECYKIAGMAEAYDVTLAPHCPLGPIALAACLHIDFVSYNAVLQEQSMGIHYNKGAELLDFVKNKEDFSMVGGFFKPLTKPGLGVEIDEAKVIEFSKNAPDWRNPLWRHEDNSVAEW.

Aspartate 183 is a binding site for Mg(2+). The active-site Proton donor is the histidine 185. Mg(2+) contacts are provided by glutamate 209 and glutamate 235. Residue histidine 285 is the Proton acceptor of the active site.

Belongs to the mandelate racemase/muconate lactonizing enzyme family. GalD subfamily. The cofactor is Mg(2+).

It catalyses the reaction D-galactonate = 2-dehydro-3-deoxy-D-galactonate + H2O. It functions in the pathway carbohydrate acid metabolism; D-galactonate degradation; D-glyceraldehyde 3-phosphate and pyruvate from D-galactonate: step 1/3. In terms of biological role, catalyzes the dehydration of D-galactonate to 2-keto-3-deoxy-D-galactonate. In Escherichia coli (strain SMS-3-5 / SECEC), this protein is D-galactonate dehydratase 1.